The sequence spans 467 residues: Uronate isomerase (467 aa).

This sequence belongs to the metallo-dependent hydrolases superfamily. Uronate isomerase family.

The catalysed reaction is D-glucuronate = D-fructuronate. It carries out the reaction aldehydo-D-galacturonate = keto-D-tagaturonate. It participates in carbohydrate metabolism; pentose and glucuronate interconversion. This chain is Uronate isomerase, found in Solibacter usitatus (strain Ellin6076).